The sequence spans 679 residues: Glycine--tRNA ligase beta subunit (679 aa).

The protein belongs to the class-II aminoacyl-tRNA synthetase family. Tetramer of two alpha and two beta subunits.

It is found in the cytoplasm. It catalyses the reaction tRNA(Gly) + glycine + ATP = glycyl-tRNA(Gly) + AMP + diphosphate. This Streptococcus pyogenes serotype M6 (strain ATCC BAA-946 / MGAS10394) protein is Glycine--tRNA ligase beta subunit.